Here is a 92-residue protein sequence, read N- to C-terminus: Conotoxin Ac8.1 (92 aa).

A signal peptide spans 1-19 (LKMGAMFVLLLLFTLASSQ). The propeptide occupies 20-44 (QEGDVQARKTSLKSDFYRALRQYDR). At Gln45 the chain carries Pyrrolidone carboxylic acid.

Belongs to the conotoxin S superfamily. Contains 5 disulfide bonds. Expressed by the venom duct.

The protein localises to the secreted. The chain is Conotoxin Ac8.1 from Conus achatinus (Little frog cone).